The primary structure comprises 218 residues: Nucleoid occlusion factor SlmA (218 aa).

The 61-residue stretch at 30–90 (ERRQQVLTVL…ALIEHIESTL (61 aa)) folds into the HTH tetR-type domain. The segment at residues 53–72 (TTARLAKEVGVSEAALYRYF) is a DNA-binding region (H-T-H motif).

This sequence belongs to the nucleoid occlusion factor SlmA family. Homodimer. Interacts with FtsZ.

The protein resides in the cytoplasm. It is found in the nucleoid. Functionally, required for nucleoid occlusion (NO) phenomenon, which prevents Z-ring formation and cell division over the nucleoid. Acts as a DNA-associated cell division inhibitor that binds simultaneously chromosomal DNA and FtsZ, and disrupts the assembly of FtsZ polymers. SlmA-DNA-binding sequences (SBS) are dispersed on non-Ter regions of the chromosome, preventing FtsZ polymerization at these regions. This chain is Nucleoid occlusion factor SlmA, found in Haemophilus influenzae (strain PittGG).